The following is a 161-amino-acid chain: Pleiotrophin-B (161 aa).

Positions 1–23 (MHHQHGLFMLALLAFLLVMTVLG) are cleaved as a signal peptide. Cystine bridges form between Cys41–Cys70, Cys49–Cys79, Cys56–Cys83, Cys93–Cys125, and Cys103–Cys135. 2 chondroitin sulfate binding regions span residues 86 to 93 (KKQFGAEC) and 117 to 125 (KRALHNAEC). Residues 136-161 (GKVTKPKLQESKKKKKEGKNKEKLLD) form a disordered region. The chondroitin sulfate A binding stretch occupies residues 141 to 161 (PKLQESKKKKKEGKNKEKLLD).

The protein belongs to the pleiotrophin family. As to expression, expressed in high levels in brain and eye. Lower levels in bone. In the tailbud embryo stage, it is expressed exclusively in the central nervous system, especially in the hind region of the brain.

Its subcellular location is the secreted. Functionally, secreted growth factor that mediates its signal through cell-surface proteoglycan and non-proteoglycan receptors. Binds cell-surface proteoglycan receptor via their chondroitin sulfate (CS) groups. Thereby regulates many processes like cell proliferation, cell survival, cell growth, cell differentiation and cell migration. Has antibacterial activity against both Gram-positive and Gram-negative bacteria. In Xenopus laevis (African clawed frog), this protein is Pleiotrophin-B (ptn-b).